The primary structure comprises 396 residues: Phosphoglycerate kinase (396 aa).

Residues 21–23 (DFN), arginine 37, 60–63 (HLGR), arginine 121, and arginine 154 contribute to the substrate site. Residues lysine 205, glycine 296, glutamate 327, and 353–356 (GGDS) each bind ATP.

This sequence belongs to the phosphoglycerate kinase family. In terms of assembly, monomer.

Its subcellular location is the cytoplasm. It carries out the reaction (2R)-3-phosphoglycerate + ATP = (2R)-3-phospho-glyceroyl phosphate + ADP. The protein operates within carbohydrate degradation; glycolysis; pyruvate from D-glyceraldehyde 3-phosphate: step 2/5. The sequence is that of Phosphoglycerate kinase from Anaeromyxobacter sp. (strain Fw109-5).